The sequence spans 434 residues: Serine hydroxymethyltransferase 1 (434 aa).

Residues leucine 136 and 140-142 (GHL) each bind (6S)-5,6,7,8-tetrahydrofolate. At lysine 245 the chain carries N6-(pyridoxal phosphate)lysine.

Belongs to the SHMT family. As to quaternary structure, homodimer. Requires pyridoxal 5'-phosphate as cofactor.

The protein localises to the cytoplasm. It carries out the reaction (6R)-5,10-methylene-5,6,7,8-tetrahydrofolate + glycine + H2O = (6S)-5,6,7,8-tetrahydrofolate + L-serine. Its pathway is one-carbon metabolism; tetrahydrofolate interconversion. It functions in the pathway amino-acid biosynthesis; glycine biosynthesis; glycine from L-serine: step 1/1. In terms of biological role, catalyzes the reversible interconversion of serine and glycine with tetrahydrofolate (THF) serving as the one-carbon carrier. This reaction serves as the major source of one-carbon groups required for the biosynthesis of purines, thymidylate, methionine, and other important biomolecules. Also exhibits THF-independent aldolase activity toward beta-hydroxyamino acids, producing glycine and aldehydes, via a retro-aldol mechanism. The polypeptide is Serine hydroxymethyltransferase 1 (Rhodospirillum rubrum (strain ATCC 11170 / ATH 1.1.1 / DSM 467 / LMG 4362 / NCIMB 8255 / S1)).